A 273-amino-acid chain; its full sequence is 4-hydroxy-tetrahydrodipicolinate reductase 1 (273 aa).

Residues 13–18 (GAAGRM) and Glu-39 each bind NAD(+). Arg-40 contacts NADP(+). NAD(+)-binding positions include 103–105 (GTT) and 127–130 (SGNM). The Proton donor/acceptor role is filled by His-161. His-162 is a (S)-2,3,4,5-tetrahydrodipicolinate binding site. Lys-165 serves as the catalytic Proton donor. A (S)-2,3,4,5-tetrahydrodipicolinate-binding site is contributed by 171–172 (GT).

It belongs to the DapB family.

Its subcellular location is the cytoplasm. It catalyses the reaction (S)-2,3,4,5-tetrahydrodipicolinate + NAD(+) + H2O = (2S,4S)-4-hydroxy-2,3,4,5-tetrahydrodipicolinate + NADH + H(+). The catalysed reaction is (S)-2,3,4,5-tetrahydrodipicolinate + NADP(+) + H2O = (2S,4S)-4-hydroxy-2,3,4,5-tetrahydrodipicolinate + NADPH + H(+). Its pathway is amino-acid biosynthesis; L-lysine biosynthesis via DAP pathway; (S)-tetrahydrodipicolinate from L-aspartate: step 4/4. Its function is as follows. Catalyzes the conversion of 4-hydroxy-tetrahydrodipicolinate (HTPA) to tetrahydrodipicolinate. This is 4-hydroxy-tetrahydrodipicolinate reductase 1 from Mesorhizobium japonicum (strain LMG 29417 / CECT 9101 / MAFF 303099) (Mesorhizobium loti (strain MAFF 303099)).